A 495-amino-acid chain; its full sequence is 3-octaprenyl-4-hydroxybenzoate carboxy-lyase (495 aa).

N172 is a Mn(2+) binding site. Residues 175-177, 189-191, and 194-195 each bind prenylated FMN; these read IYR, RWL, and RG. E238 is a Mn(2+) binding site. The active-site Proton donor is the D287.

The protein belongs to the UbiD family. In terms of assembly, homohexamer. Requires prenylated FMN as cofactor. It depends on Mn(2+) as a cofactor.

It localises to the cell membrane. The catalysed reaction is a 4-hydroxy-3-(all-trans-polyprenyl)benzoate + H(+) = a 2-(all-trans-polyprenyl)phenol + CO2. Its pathway is cofactor biosynthesis; ubiquinone biosynthesis. Catalyzes the decarboxylation of 3-octaprenyl-4-hydroxy benzoate to 2-octaprenylphenol, an intermediate step in ubiquinone biosynthesis. In Marinobacter nauticus (strain ATCC 700491 / DSM 11845 / VT8) (Marinobacter aquaeolei), this protein is 3-octaprenyl-4-hydroxybenzoate carboxy-lyase.